The sequence spans 160 residues: Ribosomal RNA large subunit methyltransferase H (160 aa).

S-adenosyl-L-methionine contacts are provided by Leu-77 and Gly-109.

It belongs to the RNA methyltransferase RlmH family. Homodimer.

The protein localises to the cytoplasm. It carries out the reaction pseudouridine(1915) in 23S rRNA + S-adenosyl-L-methionine = N(3)-methylpseudouridine(1915) in 23S rRNA + S-adenosyl-L-homocysteine + H(+). In terms of biological role, specifically methylates the pseudouridine at position 1915 (m3Psi1915) in 23S rRNA. The sequence is that of Ribosomal RNA large subunit methyltransferase H from Moorella thermoacetica (strain ATCC 39073 / JCM 9320).